Reading from the N-terminus, the 180-residue chain is Beta-lactoglobulin (180 aa).

The first 18 residues, 1-18 (MKCLLLALGLALACAAQA), serve as a signal peptide directing secretion. Intrachain disulfides connect cysteine 84–cysteine 178, cysteine 124–cysteine 137, and cysteine 124–cysteine 139.

It belongs to the calycin superfamily. Lipocalin family. In terms of assembly, under physiological conditions beta-lactoglobulin exists as an equilibrium mixture of monomeric and dimeric forms. Interaction with LMBR1L is controversial. Alternate disulfide bonds occur in equal amounts. Synthesized in mammary gland and secreted in milk.

The protein localises to the secreted. Functionally, primary component of whey, it binds retinol and is probably involved in the transport of that molecule. The chain is Beta-lactoglobulin (LGB) from Bubalus bubalis (Domestic water buffalo).